The sequence spans 889 residues: Extended synaptotagmin-3 (889 aa).

Residues 1–65 (MAQGDPGGQT…GPRDPGQGGA (65 aa)) are disordered. Over 1–66 (MAQGDPGGQT…PRDPGQGGAG (66 aa)) the chain is Cytoplasmic. 2 stretches are compositionally biased toward basic and acidic residues: residues 17–28 (TDKKPDEPKATE) and 41–58 (PGGE…KGPR). 2 helical membrane-spanning segments follow: residues 67–91 (EALA…FPVY) and 92–112 (LCGR…LWMF). The Cytoplasmic segment spans residues 113-889 (WTRNKKFKLA…ELTPTGLPTS (777 aa)). An SMP-LTD domain is found at 155–333 (DVERVEWLNK…LPNRFTVPLS (179 aa)). C2 domains follow at residues 331-452 (PLSS…DEWF) and 468-618 (WLSL…STIK). Ca(2+)-binding residues include Lys-363, Asp-364, Asp-376, Asp-423, Glu-424, Asp-425, Asp-427, Asp-429, and Asp-430. The segment at 649–724 (SIKRAQSQQH…GAVPESHTPS (76 aa)) is disordered. Basic residues predominate over residues 658–671 (HKSHGKSHQAHHQA). Low complexity-rich tracts occupy residues 672 to 682 (HQTQQNHTVQQ) and 691 to 714 (ISTT…PNST). The region spanning 757 to 879 (MTGEVEVSVR…DLVKGFTKWF (123 aa)) is the C2 3 domain. Positions 804-811 (RKWSGRKK) are required for phosphatidylinositol 4,5-bisphosphate-dependent location at the cell membrane.

Belongs to the extended synaptotagmin family.

Its subcellular location is the cell membrane. The protein resides in the endoplasmic reticulum membrane. Its function is as follows. Tethers the endoplasmic reticulum to the cell membrane and promotes the formation of appositions between the endoplasmic reticulum and the cell membrane. Binds glycerophospholipids in a barrel-like domain and may play a role in cellular lipid transport. The chain is Extended synaptotagmin-3 (esyt3) from Xenopus tropicalis (Western clawed frog).